Consider the following 256-residue polypeptide: uncharacterized protein (256 aa).

This is an uncharacterized protein from Treponema pallidum (strain Nichols).